A 627-amino-acid chain; its full sequence is Coiled-coil domain-containing protein 22 (627 aa).

Residues 1–321 are sufficient for interaction with COMMD1; the sequence is MEEADRILIH…VADIPAASQR (321 aa). The tract at residues 1 to 447 is sufficicient and required for interaction with CCDC93; it reads MEEADRILIH…LQDCRELESS (447 aa). The stretch at 321-384 forms a coiled coil; sequence RPEQDTRAAQ…SVAEQEQALR (64 aa). Residue Ser-410 is modified to Phosphoserine. The stretch at 448–535 forms a coiled coil; it reads RRLVEIQELH…NSLSGKLDRT (88 aa).

The protein belongs to the CCDC22 family. In terms of assembly, component of the commander complex consisting of the CCC subcomplex and the retriever subcomplex. Component of the CCC (COMMD/CCDC22/CCDC93) subcomplex consisting of COMMD1, COMMD2, COMMD3, COMMD4, COMMD5, COMMD6, COMMD7, COMMD8, COMMD9, COMMD10, CCDC22 and CCDC93. Forms a coiled-coil heterodimer with CCDC22; this heterodimer interacts with the guanine nucleotide exchange factor DENND10; the interaction is direct. Interacts with CUL1, CUL2, CUL3, SKP1, BTRC. Interacts with SNX17 and SNX31. Interacts with CPNE1 and CPNE4.

The protein localises to the endosome. It localises to the cytoplasm. The protein resides in the cytoskeleton. It is found in the microtubule organizing center. Its subcellular location is the centrosome. In terms of biological role, component of the commander complex that is essential for endosomal recycling of transmembrane cargos; the Commander complex is composed of composed of the CCC subcomplex and the retriever subcomplex. Component of the CCC complex, which is involved in the regulation of endosomal recycling of surface proteins, including integrins, signaling receptor and channels. Involved in regulation of NF-kappa-B signaling. Promotes ubiquitination of I-kappa-B-kinase subunit IKBKB and its subsequent proteasomal degradation leading to NF-kappa-B activation; the function may involve association with COMMD8 and a CUL1-dependent E3 ubiquitin ligase complex. May down-regulate NF-kappa-B activity via association with COMMD1 and involving a CUL2-dependent E3 ubiquitin ligase complex. Regulates the cellular localization of COMM domain-containing proteins, such as COMMD1 and COMMD10. Component of the CCC complex, which is involved in the regulation of endosomal recycling of surface proteins, including integrins, signaling receptor and channels. The CCC complex associates with SNX17, retriever and WASH complexes to prevent lysosomal degradation and promote cell surface recycling of numerous cargos such as integrins ITGA5:ITGB1. Plays a role in copper ion homeostasis. Involved in copper-dependent ATP7A trafficking between the trans-Golgi network and vesicles in the cell periphery; the function is proposed to depend on its association within the CCC complex and cooperation with the WASH complex on early endosomes. This Rattus norvegicus (Rat) protein is Coiled-coil domain-containing protein 22.